The following is a 266-amino-acid chain: Undecaprenyl-diphosphatase (266 aa).

The next 8 membrane-spanning stretches (helical) occupy residues 1-21, 39-59, 87-107, 114-134, 144-164, 184-204, 218-238, and 246-266; these read MDIF…FLPI, QGLT…VIYF, WWII…KDFI, IEVI…ADKL, VGWK…IPGT, AARF…ILVV, ALVL…HYFL, and MTPF…VIFA.

This sequence belongs to the UppP family.

It localises to the cell inner membrane. It carries out the reaction di-trans,octa-cis-undecaprenyl diphosphate + H2O = di-trans,octa-cis-undecaprenyl phosphate + phosphate + H(+). Functionally, catalyzes the dephosphorylation of undecaprenyl diphosphate (UPP). Confers resistance to bacitracin. This Shewanella loihica (strain ATCC BAA-1088 / PV-4) protein is Undecaprenyl-diphosphatase.